The following is a 504-amino-acid chain: Cytochrome P450 2S1 (504 aa).

C440 contacts heme.

It belongs to the cytochrome P450 family. The cofactor is heme. In terms of tissue distribution, expressed at higher levels in extrahepatic tissues including trachea, lung, stomach, small intestine, colon, kidney, breast, placenta and spleen. Expressed in peripheral blood leukocytes. Constitutively expressed in skin (at protein level).

It is found in the endoplasmic reticulum membrane. The protein localises to the microsome membrane. The catalysed reaction is all-trans-retinoate + reduced [NADPH--hemoprotein reductase] + O2 = all-trans-5,6-epoxyretinoate + oxidized [NADPH--hemoprotein reductase] + H2O + H(+). The enzyme catalyses all-trans-retinoate + reduced [NADPH--hemoprotein reductase] + O2 = all-trans-4-hydroxyretinoate + oxidized [NADPH--hemoprotein reductase] + H2O + H(+). It carries out the reaction (5S)-hydroperoxy-(6E,8Z,11Z,14Z)-eicosatetraenoate = 5-oxo-(6E,8Z,11Z,14Z)-eicosatetraenoate + H2O. It catalyses the reaction (12S)-hydroperoxy-(5Z,8Z,10E,14Z)-eicosatetraenoate = 12-oxo-(5Z,8Z,10E,14Z)-eicosatetraenoate + H2O. The catalysed reaction is (15S)-hydroperoxy-(5Z,8Z,11Z,13E)-eicosatetraenoate = 15-oxo-(5Z,8Z,11Z,13E)-eicosatetraenoate + H2O. The enzyme catalyses prostaglandin H2 = thromboxane A2. It carries out the reaction prostaglandin H2 = (12S)-hydroxy-(5Z,8E,10E)-heptadecatrienoate + malonaldehyde. It catalyses the reaction (13S)-hydroperoxy-(9Z,11E)-octadecadienoate = 13-oxo-(9Z,11E)-octadecadienoate + H2O. Its pathway is lipid metabolism; fatty acid metabolism. In terms of biological role, a cytochrome P450 monooxygenase involved in the metabolism of retinoids and eicosanoids. In epidermis, may contribute to the oxidative metabolism of all-trans-retinoic acid. For this activity, uses molecular oxygen inserting one oxygen atom into a substrate, and reducing the second into a water molecule, with two electrons provided by NADPH via cytochrome P450 reductase (NADPH--hemoprotein reductase). Additionally, displays peroxidase and isomerase activities toward various oxygenated eicosanoids such as prostaglandin H2 (PGH2) and hydroperoxyeicosatetraenoates (HPETEs). Independently of cytochrome P450 reductase, NADPH, and O2, catalyzes the breakdown of PGH2 to hydroxyheptadecatrienoic acid (HHT) and malondialdehyde (MDA), which is known to act as a mediator of DNA damage. In Homo sapiens (Human), this protein is Cytochrome P450 2S1.